The following is a 603-amino-acid chain: Elongation factor 4 (603 aa).

Residues 7–189 (SRIRNFSIIA…SIVHLVPPPQ (183 aa)) enclose the tr-type G domain. GTP is bound by residues 19–24 (DHGKST) and 136–139 (NKID).

Belongs to the TRAFAC class translation factor GTPase superfamily. Classic translation factor GTPase family. LepA subfamily.

The protein localises to the cell inner membrane. The enzyme catalyses GTP + H2O = GDP + phosphate + H(+). In terms of biological role, required for accurate and efficient protein synthesis under certain stress conditions. May act as a fidelity factor of the translation reaction, by catalyzing a one-codon backward translocation of tRNAs on improperly translocated ribosomes. Back-translocation proceeds from a post-translocation (POST) complex to a pre-translocation (PRE) complex, thus giving elongation factor G a second chance to translocate the tRNAs correctly. Binds to ribosomes in a GTP-dependent manner. The protein is Elongation factor 4 of Rippkaea orientalis (strain PCC 8801 / RF-1) (Cyanothece sp. (strain PCC 8801)).